A 316-amino-acid chain; its full sequence is Arabinooligosaccharides transport system permease protein AraP (316 aa).

The next 7 membrane-spanning stretches (helical) occupy residues V32–P52, T94–L114, A128–F148, M178–L198, F224–I244, F254–Y274, and M283–T303. The ABC transmembrane type-1 domain occupies L89–Q304.

This sequence belongs to the binding-protein-dependent transport system permease family. MalFG subfamily. The complex is composed of two ATP-binding proteins (MsmX), two transmembrane proteins (AraP and AraQ) and a solute-binding protein (AraN).

It is found in the cell membrane. In terms of biological role, part of the ABC transporter complex AraNPQ involved in the uptake of arabinooligosaccharides. Responsible for the translocation of the substrate across the membrane. The polypeptide is Arabinooligosaccharides transport system permease protein AraP (araP) (Halalkalibacterium halodurans (strain ATCC BAA-125 / DSM 18197 / FERM 7344 / JCM 9153 / C-125) (Bacillus halodurans)).